Here is a 66-residue protein sequence, read N- to C-terminus: Toxin Boma6a (66 aa).

Positions 2–64 (RDAYIAQNYN…VPIKVEGKCH (63 aa)) constitute an LCN-type CS-alpha/beta domain. 4 disulfide bridges follow: cysteine 12/cysteine 63, cysteine 16/cysteine 36, cysteine 22/cysteine 46, and cysteine 26/cysteine 48.

It belongs to the long (4 C-C) scorpion toxin superfamily. Sodium channel inhibitor family. Alpha subfamily. Expressed by the venom gland.

It is found in the secreted. Its function is as follows. Alpha toxins bind voltage-independently at site-3 of sodium channels (Nav) and inhibit the inactivation of the activated channels, thereby blocking neuronal transmission. This chain is Toxin Boma6a, found in Buthus occitanus mardochei (Moroccan scorpion).